Reading from the N-terminus, the 125-residue chain is NADPH-dependent 7-cyano-7-deazaguanine reductase (125 aa).

Residue Cys40 is the Thioimide intermediate of the active site. Residue Asp47 is the Proton donor of the active site. Substrate contacts are provided by residues 62–64 (LET) and 81–82 (HE).

It belongs to the GTP cyclohydrolase I family. QueF type 1 subfamily.

The protein resides in the cytoplasm. It carries out the reaction 7-aminomethyl-7-carbaguanine + 2 NADP(+) = 7-cyano-7-deazaguanine + 2 NADPH + 3 H(+). The protein operates within tRNA modification; tRNA-queuosine biosynthesis. Catalyzes the NADPH-dependent reduction of 7-cyano-7-deazaguanine (preQ0) to 7-aminomethyl-7-deazaguanine (preQ1). This Frankia casuarinae (strain DSM 45818 / CECT 9043 / HFP020203 / CcI3) protein is NADPH-dependent 7-cyano-7-deazaguanine reductase.